The chain runs to 869 residues: Bifunctional uridylyltransferase/uridylyl-removing enzyme (869 aa).

A uridylyltransferase region spans residues 1–332 (MTDTPAERPD…QFDGEATPEP (332 aa)). The uridylyl-removing stretch occupies residues 333–691 (LGGGFSLRRG…RRAVPDNDAL (359 aa)). An HD domain is found at 450–572 (VDQHTLMVLR…VGTRERLDYL (123 aa)). 2 ACT domains span residues 692–774 (EVFV…RAVP) and 798–869 (RISL…LDPV).

The protein belongs to the GlnD family. Requires Mg(2+) as cofactor.

The catalysed reaction is [protein-PII]-L-tyrosine + UTP = [protein-PII]-uridylyl-L-tyrosine + diphosphate. It carries out the reaction [protein-PII]-uridylyl-L-tyrosine + H2O = [protein-PII]-L-tyrosine + UMP + H(+). Uridylyltransferase (UTase) activity is inhibited by glutamine, while glutamine activates uridylyl-removing (UR) activity. In terms of biological role, modifies, by uridylylation and deuridylylation, the PII regulatory proteins (GlnB and homologs), in response to the nitrogen status of the cell that GlnD senses through the glutamine level. Under low glutamine levels, catalyzes the conversion of the PII proteins and UTP to PII-UMP and PPi, while under higher glutamine levels, GlnD hydrolyzes PII-UMP to PII and UMP (deuridylylation). Thus, controls uridylylation state and activity of the PII proteins, and plays an important role in the regulation of nitrogen assimilation and metabolism. The protein is Bifunctional uridylyltransferase/uridylyl-removing enzyme of Xanthomonas euvesicatoria pv. vesicatoria (strain 85-10) (Xanthomonas campestris pv. vesicatoria).